The chain runs to 148 residues: Cytochrome c-type biogenesis protein CcmE (148 aa).

At 1 to 7 (MKPRNRR) the chain is on the cytoplasmic side. The chain crosses the membrane as a helical; Signal-anchor for type II membrane protein span at residues 8–28 (IALIVAGLSALGIATALVLNA). The Periplasmic segment spans residues 29 to 148 (FQSNLVFFFT…VQKKPASRKP (120 aa)). Heme-binding residues include histidine 123 and tyrosine 127. The tract at residues 128 to 148 (MPPEAQHALDEVQKKPASRKP) is disordered.

Belongs to the CcmE/CycJ family.

It is found in the cell inner membrane. In terms of biological role, heme chaperone required for the biogenesis of c-type cytochromes. Transiently binds heme delivered by CcmC and transfers the heme to apo-cytochromes in a process facilitated by CcmF and CcmH. The chain is Cytochrome c-type biogenesis protein CcmE from Pseudomonas aeruginosa.